Reading from the N-terminus, the 88-residue chain is Selenoprotein W (88 aa).

Residues 10-13 constitute a cross-link (cysteinyl-selenocysteine (Cys-Sec); redox-active); that stretch reads CGAU. Position 13 (U13) is a non-standard amino acid, selenocysteine. S-glutathionyl cysteine is present on C37.

The protein belongs to the SelWTH family. Selenoprotein W subfamily. As to quaternary structure, interacts with DPYSL2, PRDX1, YWHAB, YWHAG, HSP70 and HSP90. In the embryo, expressed in the developing nervous system and in mesoderm-derived tissues such as heart and limbs. In the adult, predominantly expressed in brain, skeletal muscle and heart.

The protein localises to the cytoplasm. Functionally, plays a role as a glutathione (GSH)-dependent antioxidant. May be involved in a redox-related process. May play a role in the myopathies of selenium deficiency. This chain is Selenoprotein W, found in Mus musculus (Mouse).